We begin with the raw amino-acid sequence, 906 residues long: Translation initiation factor IF-2 (906 aa).

Disordered regions lie at residues 134-250 (RQRN…GSHV) and 269-317 (HLSA…FERP). Positions 136–177 (RNLDEQQRLAESDRVRDEEIQRKRDEEQAAKDRAEAERKAAE) are enriched in basic and acidic residues. 2 stretches are compositionally biased toward low complexity: residues 178-232 (EAAA…STPA) and 287-305 (GRPG…RGSN). One can recognise a tr-type G domain in the interval 405-574 (TRPPVVTIMG…SLQAEVLELK (170 aa)). A G1 region spans residues 414–421 (GHVDHGKT). 414–421 (GHVDHGKT) is a binding site for GTP. Residues 439 to 443 (GITQH) are G2. Residues 460-463 (DTPG) form a G3 region. Residues 460–464 (DTPGH) and 514–517 (NKID) contribute to the GTP site. Residues 514-517 (NKID) form a G4 region. The tract at residues 550-552 (SAK) is G5.

The protein belongs to the TRAFAC class translation factor GTPase superfamily. Classic translation factor GTPase family. IF-2 subfamily.

Its subcellular location is the cytoplasm. In terms of biological role, one of the essential components for the initiation of protein synthesis. Protects formylmethionyl-tRNA from spontaneous hydrolysis and promotes its binding to the 30S ribosomal subunits. Also involved in the hydrolysis of GTP during the formation of the 70S ribosomal complex. The chain is Translation initiation factor IF-2 from Xanthomonas oryzae pv. oryzae (strain MAFF 311018).